The sequence spans 679 residues: Glycine--tRNA ligase beta subunit (679 aa).

This sequence belongs to the class-II aminoacyl-tRNA synthetase family. Tetramer of two alpha and two beta subunits.

Its subcellular location is the cytoplasm. It carries out the reaction tRNA(Gly) + glycine + ATP = glycyl-tRNA(Gly) + AMP + diphosphate. This is Glycine--tRNA ligase beta subunit from Thermodesulfovibrio yellowstonii (strain ATCC 51303 / DSM 11347 / YP87).